Here is a 185-residue protein sequence, read N- to C-terminus: Ribosome-recycling factor (185 aa).

The protein belongs to the RRF family.

The protein localises to the cytoplasm. Responsible for the release of ribosomes from messenger RNA at the termination of protein biosynthesis. May increase the efficiency of translation by recycling ribosomes from one round of translation to another. In Bacillus anthracis (strain CDC 684 / NRRL 3495), this protein is Ribosome-recycling factor.